Here is a 225-residue protein sequence, read N- to C-terminus: Insulin-induced gene 2 protein (225 aa).

Topologically, residues 1–28 (MAEGETKSPGPKKCGPYISSVTSQSVNL) are cytoplasmic. A helical transmembrane segment spans residues 29 to 51 (MIRGVVLFFIGVFLALVLNLLQI). At 52–70 (QRNVTLFPPDVIASIFSSA) the chain is on the lumenal side. A helical transmembrane segment spans residues 71 to 88 (WWVPPCCGTASAVIGLLY). Topologically, residues 89–103 (PCIDRHLGEPHKFKR) are cytoplasmic. The chain crosses the membrane as a helical span at residues 104–126 (EWSSVMRCVAVFVGINHASAKVD). Topologically, residues 127 to 129 (FDN) are lumenal. Residues 130–148 (NIQLSLTLAALSIGLWWTF) form a helical membrane-spanning segment. Residues 149–153 (DRSRS) are Cytoplasmic-facing. Position 151 is a phosphoserine (S151). Residues 154 to 175 (GFGLGVGIAFLATLVTQLLVYN) form a helical membrane-spanning segment. Residues 176-189 (GVYQYTSPDFLYVR) lie on the Lumenal side of the membrane. The chain crosses the membrane as a helical span at residues 190-207 (SWLPCIFFAGGITMGNIG). At 208–225 (RQLAMYECKVIAEKSHQE) the chain is on the cytoplasmic side. The residue at position 215 (C215) is a Cysteine sulfenic acid (-SOH); alternate. C215 participates in a covalent cross-link: Glycyl cysteine thioester (Cys-Gly) (interchain with G-Cter in ubiquitin); alternate. The short motif at 219-225 (AEKSHQE) is the KxHxx element.

It belongs to the INSIG family. In terms of assembly, interacts with SCAP; interaction is direct and only takes place in the presence of sterols; it prevents interaction between SCAP and the coat protein complex II (COPII). Associates with the SCAP-SREBP complex (composed of SCAP and SREBF1/SREBP1 or SREBF2/SREBP2); association is mediated via its interaction with SCAP and only takes place in the presence of sterols. Interacts with RNF139. Interacts with RNF145. Post-translationally, phosphorylation at Ser-151 by PCK1 reduces binding to oxysterol, disrupting the interaction between INSIG2 and SCAP, thereby promoting nuclear translocation of SREBP proteins (SREBF1/SREBP1 or SREBF2/SREBP2) and subsequent transcription of downstream lipogenesis-related genes. Polyubiquitinated by AMFR/gp78 at Cys-215 in some tissues such as adipose tissues, undifferentiated myoblasts and liver, leading to its degradation. In differentiated myotubes, Cys-215 oxidation prevents ubiquitination at the same site, resulting in protein stabilization. In terms of processing, oxidized at Cys-215 in differentiated myotubes, preventing ubiquitination at the same site, and resulting in protein stabilization.

Its subcellular location is the endoplasmic reticulum membrane. Oxysterol-binding protein that mediates feedback control of cholesterol synthesis by controlling both endoplasmic reticulum to Golgi transport of SCAP and degradation of HMGCR. Acts as a negative regulator of cholesterol biosynthesis by mediating the retention of the SCAP-SREBP complex in the endoplasmic reticulum, thereby blocking the processing of sterol regulatory element-binding proteins (SREBPs) SREBF1/SREBP1 and SREBF2/SREBP2. Binds oxysterol, including 22-hydroxycholesterol, 24-hydroxycholesterol, 25-hydroxycholesterol and 27-hydroxycholesterol, regulating interaction with SCAP and retention of the SCAP-SREBP complex in the endoplasmic reticulum. In presence of oxysterol, interacts with SCAP, retaining the SCAP-SREBP complex in the endoplasmic reticulum, thereby preventing SCAP from escorting SREBF1/SREBP1 and SREBF2/SREBP2 to the Golgi. Sterol deprivation or phosphorylation by PCK1 reduce oxysterol-binding, disrupting the interaction between INSIG2 and SCAP, thereby promoting Golgi transport of the SCAP-SREBP complex, followed by processing and nuclear translocation of SREBF1/SREBP1 and SREBF2/SREBP2. Also regulates cholesterol synthesis by regulating degradation of HMGCR: initiates the sterol-mediated ubiquitin-mediated endoplasmic reticulum-associated degradation (ERAD) of HMGCR via recruitment of the reductase to the ubiquitin ligase RNF139. This chain is Insulin-induced gene 2 protein, found in Sus scrofa (Pig).